Here is a 264-residue protein sequence, read N- to C-terminus: Stress response regulator protein 1 (264 aa).

The segment at 50–74 (IYSDCDNNKNNNDDDDDDDDYNKDT) is disordered. The segment covering 62-74 (DDDDDDDDYNKDT) has biased composition (acidic residues). One can recognise a Response regulatory domain in the interval 138–256 (RFLIVDDNII…LDLIGGSIDD (119 aa)). 4-aspartylphosphate is present on D189.

Required for stress adaptation, morphogenesis and virulence. This is Stress response regulator protein 1 (SRR1) from Candida tropicalis (strain ATCC MYA-3404 / T1) (Yeast).